The primary structure comprises 460 residues: Nuclear distribution protein PAC1 (460 aa).

The region spanning 9-41 is the LisH domain; the sequence is QAEELHKSIIAYLAANNLQDSANAMRTELGLGE. The stretch at 61-88 forms a coiled coil; that stretch reads TSVVRLQKKIMDLEAQTQTLQTELNSAT. The span at 82–92 shows a compositional bias: polar residues; it reads TELNSATPTSN. The disordered stretch occupies residues 82 to 105; the sequence is TELNSATPTSNRRGDPSSWLPAGP. 7 WD repeats span residues 112–153, 155–195, 199–246, 249–288, 293–354, 355–394, and 399–456; these read SHRT…RTVK, HTKA…QNIR, GHDH…CVKT, GHAD…PEAK, GHEH…KTLI, GHDN…KCVK, and SHEH…MSLR. The disordered stretch occupies residues 414–433; that stretch reads IKDKGPGEETNGDVGTPKKA.

This sequence belongs to the WD repeat LIS1/nudF family. As to quaternary structure, self-associates. Interacts with NDL1 and dynein.

It localises to the cytoplasm. Its subcellular location is the cytoskeleton. The protein resides in the spindle pole. Positively regulates the activity of the minus-end directed microtubule motor protein dynein. May enhance dynein-mediated microtubule sliding by targeting dynein to the microtubule plus end. Required for nuclear migration during vegetative growth as well as development. Required for retrograde early endosome (EE) transport from the hyphal tip. Required for localization of dynein to the mitotic spindle poles. Recruits additional proteins to the dynein complex at SPBs. The polypeptide is Nuclear distribution protein PAC1 (Gibberella zeae (strain ATCC MYA-4620 / CBS 123657 / FGSC 9075 / NRRL 31084 / PH-1) (Wheat head blight fungus)).